We begin with the raw amino-acid sequence, 324 residues long: Short-chain dehydrogenase/reductase iacJ (324 aa).

NADP(+) is bound by residues isoleucine 42, lysine 66, aspartate 93, asparagine 120, tyrosine 204, lysine 208, and threonine 239. Tyrosine 204 functions as the Proton donor in the catalytic mechanism. The active-site Lowers pKa of active site Tyr is lysine 208.

The protein belongs to the short-chain dehydrogenases/reductases (SDR) family.

It functions in the pathway secondary metabolite biosynthesis. Short-chain dehydrogenase/reductase; part of the gene cluster that mediates the biosynthesis of iso-A82775C, a enylepoxycyclohexane and biosynthetic precursor of the chloropestolide anticancer natural products. Within the cluster, the prenyltransferase iacE prenylates siccayne to generate pestalodiol E, using dimethylallyl diphosphate (DMAPP) as cosubstrate. The probable oxidoreductase iacF is then involved in the epoxidation of pestalodiol F to pestalodiol F, which is further converted to pestalofone A by the short-chain dehydrogenase/reductase iacG. Iso-A82775C is subsequently generated from pestalofone A by the short-chain dehydrogenase/reductase iacC. Iso-A82775C is further condensed with maldoxin via a Diels-Alder reaction to produce the anticancer natural products chloropestolides A to E. This chain is Short-chain dehydrogenase/reductase iacJ, found in Pestalotiopsis fici (strain W106-1 / CGMCC3.15140).